The sequence spans 403 residues: Neuromedin U receptor homolog nmur-2 (403 aa).

Residues 1-27 (MSQCTVEYNVSEITEYVLSTLGERCQS) are Extracellular-facing. A helical membrane pass occupies residues 28–48 (AGIVIPTVIIYGTIFLLGLFG). The Cytoplasmic segment spans residues 49–68 (NICTCIVIAANKSMHNPTNY). The chain crosses the membrane as a helical span at residues 69-89 (YLFSLAVSDIIALILGLPMEF). Over 90–109 (YQSLDYSYPYRFSEGICKAR) the chain is Extracellular. Residues 110-130 (AFLIEFTSYASIMIICCFSFE) traverse the membrane as a helical segment. Residues 131 to 151 (RWLAICHPLRSKIFSTLWRAN) lie on the Cytoplasmic side of the membrane. Residues 152 to 172 (VLIILAWTISFVCALPIAFIV) traverse the membrane as a helical segment. Over 173–216 (QINKLPLPEDAKYQPWTNKVSTDGIFVLHTEFCAMNQSRPDQQK) the chain is Extracellular. A helical membrane pass occupies residues 217-237 (MIIIFAFTVFFVIPAIAIVIM). At 238–268 (YAHIAVQLESSEIDLKGDKMVKKRRNKSNRT) the chain is on the cytoplasmic side. Residues 269–289 (VLKMLLSVVITFFICWLPFHI) traverse the membrane as a helical segment. The Extracellular segment spans residues 290–304 (QRLLSVYTTWSETTT). A helical transmembrane segment spans residues 305–325 (ISPPVQFLSMIVFYISGFCYY). At 326 to 403 (SNSAANPILY…PHRKLEVHNY (78 aa)) the chain is on the cytoplasmic side.

This sequence belongs to the G-protein coupled receptor 1 family.

The protein resides in the membrane. In terms of biological role, putative G protein-coupled receptor for pyrokinin-like neuropeptide derived from the processing of the neuropeptide precursor capa-1. This Caenorhabditis elegans protein is Neuromedin U receptor homolog nmur-2.